A 419-amino-acid polypeptide reads, in one-letter code: Glutamyl-tRNA reductase (419 aa).

Residues 50-53 (TCNR), Ser108, 113-115 (ETQ), and Gln119 contribute to the substrate site. Cys51 acts as the Nucleophile in catalysis. 188-193 (GAGEMI) lines the NADP(+) pocket.

The protein belongs to the glutamyl-tRNA reductase family. In terms of assembly, homodimer.

It catalyses the reaction (S)-4-amino-5-oxopentanoate + tRNA(Glu) + NADP(+) = L-glutamyl-tRNA(Glu) + NADPH + H(+). It functions in the pathway porphyrin-containing compound metabolism; protoporphyrin-IX biosynthesis; 5-aminolevulinate from L-glutamyl-tRNA(Glu): step 1/2. Functionally, catalyzes the NADPH-dependent reduction of glutamyl-tRNA(Glu) to glutamate 1-semialdehyde (GSA). This Albidiferax ferrireducens (strain ATCC BAA-621 / DSM 15236 / T118) (Rhodoferax ferrireducens) protein is Glutamyl-tRNA reductase.